The chain runs to 959 residues: Alanine--tRNA ligase (959 aa).

A Phosphoserine modification is found at Ser-389. Positions 606, 610, 725, and 729 each coordinate Zn(2+).

Belongs to the class-II aminoacyl-tRNA synthetase family. Monomer. It depends on Zn(2+) as a cofactor.

It localises to the mitochondrion. The protein localises to the cytoplasm. It carries out the reaction tRNA(Ala) + L-alanine + ATP = L-alanyl-tRNA(Ala) + AMP + diphosphate. Its function is as follows. Catalyzes the attachment of alanine to tRNA(Ala) in a two-step reaction: alanine is first activated by ATP to form Ala-AMP and then transferred to the acceptor end of tRNA(Ala). Also edits incorrectly charged tRNA(Ala) via its editing domain. This chain is Alanine--tRNA ligase (ala1), found in Schizosaccharomyces pombe (strain 972 / ATCC 24843) (Fission yeast).